A 165-amino-acid chain; its full sequence is MENTRSENEEQPESTLKIDEEQPAVEQSPENQCSEEDQSSEDLSSEEQSSEEEFFPEELLPELLPEMLLSEDRPPQECLSQKNQFEDRIPMEQPPCGVGKHKLEEGSFKERLARIRPQFIGDIHGRNLSNEEMIQAADELEEMKRVRNKLMIMHWKAKRSRPYPI.

The tract at residues 1-101 (MENTRSENEE…EQPPCGVGKH (101 aa)) is disordered. Positions 33–60 (CSEEDQSSEDLSSEEQSSEEEFFPEELL) are enriched in acidic residues.

This sequence belongs to the TFS-II family. TFA subfamily.

It is found in the nucleus. In terms of biological role, may be involved in transcriptional regulation. Modulates various viral and cellular promoters in a promoter context-dependent manner. Does not bind DNA directly. This chain is Transcription elongation factor A protein-like 1, found in Mus musculus (Mouse).